Consider the following 261-residue polypeptide: MRMALCLEYDGSRYYGWQRQREVASVQQCVEEALSKIANAPVEVTCAGRTDAGVHATAQIVHFDVPVPRADVAWTLGVNSNLPAGIAVRWAREVDSEFSARFSATSRRYRYIIANTRFRPGIHSAGVSHYHQPLDAEVMQEAAQALVGEHDFTAFRASHCQSHTPFRKVSDLTVERRGDYIIVDISANAFLHHMVRNIVGSLIVVGQHLQPPDWIGELLRQKDRTKAAATAKPGGLYLVAVTYPEHYNIPDAPLGPLWLGD.

Catalysis depends on Asp-51, which acts as the Nucleophile. Tyr-109 lines the substrate pocket.

It belongs to the tRNA pseudouridine synthase TruA family. Homodimer.

It catalyses the reaction uridine(38/39/40) in tRNA = pseudouridine(38/39/40) in tRNA. Formation of pseudouridine at positions 38, 39 and 40 in the anticodon stem and loop of transfer RNAs. This is tRNA pseudouridine synthase A from Idiomarina loihiensis (strain ATCC BAA-735 / DSM 15497 / L2-TR).